We begin with the raw amino-acid sequence, 356 residues long: Molybdenum import ATP-binding protein ModC (356 aa).

The region spanning Met1–Asp232 is the ABC transporter domain. Gly33–Thr40 provides a ligand contact to ATP. One can recognise a Mop domain in the interval Glu291 to Glu356.

The protein belongs to the ABC transporter superfamily. Molybdate importer (TC 3.A.1.8) family. As to quaternary structure, the complex is composed of two ATP-binding proteins (ModC), two transmembrane proteins (ModB) and a solute-binding protein (ModA).

It is found in the cell inner membrane. The enzyme catalyses molybdate(out) + ATP + H2O = molybdate(in) + ADP + phosphate + H(+). In terms of biological role, part of the ABC transporter complex ModABC involved in molybdenum import. Responsible for energy coupling to the transport system. The polypeptide is Molybdenum import ATP-binding protein ModC (Methylococcus capsulatus (strain ATCC 33009 / NCIMB 11132 / Bath)).